Consider the following 458-residue polypeptide: Cysteine--tRNA ligase (458 aa).

Cys-28 serves as a coordination point for Zn(2+). The short motif at 30–40 (VTVYDLCHFGH) is the 'HIGH' region element. Zn(2+)-binding residues include Cys-209, His-234, and Glu-238. The 'KMSKS' region signature appears at 266–270 (KMSKS). Lys-269 contacts ATP.

It belongs to the class-I aminoacyl-tRNA synthetase family. Monomer. Zn(2+) is required as a cofactor.

It localises to the cytoplasm. The catalysed reaction is tRNA(Cys) + L-cysteine + ATP = L-cysteinyl-tRNA(Cys) + AMP + diphosphate. This is Cysteine--tRNA ligase from Mannheimia succiniciproducens (strain KCTC 0769BP / MBEL55E).